Consider the following 264-residue polypeptide: 4-hydroxy-tetrahydrodipicolinate reductase (264 aa).

Gly10–Gln15 contacts NAD(+). Residue Arg37 participates in NADP(+) binding. NAD(+) contacts are provided by residues Gly99–Thr101 and Ser121–Leu124. The active-site Proton donor/acceptor is His153. His154 serves as a coordination point for (S)-2,3,4,5-tetrahydrodipicolinate. Catalysis depends on Lys157, which acts as the Proton donor. Gly163–Thr164 contacts (S)-2,3,4,5-tetrahydrodipicolinate.

This sequence belongs to the DapB family.

It is found in the cytoplasm. The enzyme catalyses (S)-2,3,4,5-tetrahydrodipicolinate + NAD(+) + H2O = (2S,4S)-4-hydroxy-2,3,4,5-tetrahydrodipicolinate + NADH + H(+). It catalyses the reaction (S)-2,3,4,5-tetrahydrodipicolinate + NADP(+) + H2O = (2S,4S)-4-hydroxy-2,3,4,5-tetrahydrodipicolinate + NADPH + H(+). Its pathway is amino-acid biosynthesis; L-lysine biosynthesis via DAP pathway; (S)-tetrahydrodipicolinate from L-aspartate: step 4/4. Catalyzes the conversion of 4-hydroxy-tetrahydrodipicolinate (HTPA) to tetrahydrodipicolinate. The polypeptide is 4-hydroxy-tetrahydrodipicolinate reductase (Ehrlichia ruminantium (strain Gardel)).